Here is a 666-residue protein sequence, read N- to C-terminus: Endogenous retrovirus group K member 7 Gag polyprotein (666 aa).

The N-myristoyl glycine moiety is linked to residue G2. Disordered stretches follow at residues 165 to 205 (GKGP…NKTQ) and 217 to 264 (ELQY…GSEL). A compositionally biased stretch (pro residues) spans 232-247 (GMPPAPQGRAPYPQPP). CCHC-type zinc fingers lie at residues 544 to 561 (GKCY…NCPV) and 580 to 597 (DLCP…QCRS). Positions 598-641 (KFDKNGQPLSGNEQRGQPQAPQQTGAFPIQPFVPQGFQEQQPPL) are disordered. Polar residues predominate over residues 604-622 (QPLSGNEQRGQPQAPQQTG).

It belongs to the beta type-B retroviral Gag protein family. HERV class-II K(HML-2) gag subfamily. In terms of processing, specific enzymatic cleavages may yield mature proteins. Post-translationally, myristoylation is essential for retroviral assembly. Alteration of the glycine residue leads to a block in the budding of particles and an accumulation of Gag inside the cell.

The protein resides in the cell membrane. The products of the Gag polyproteins of infectious retroviruses perform highly complex orchestrated tasks during the assembly, budding, maturation, and infection stages of the viral replication cycle. During viral assembly, the proteins form membrane associations and self-associations that ultimately result in budding of an immature virion from the infected cell. Gag precursors also function during viral assembly to selectively bind and package two plus strands of genomic RNA. Endogenous Gag proteins may have kept, lost or modified their original function during evolution. In Homo sapiens (Human), this protein is Endogenous retrovirus group K member 7 Gag polyprotein (ERVK-7).